We begin with the raw amino-acid sequence, 113 residues long: Putative pterin-4-alpha-carbinolamine dehydratase (113 aa).

It belongs to the pterin-4-alpha-carbinolamine dehydratase family.

The enzyme catalyses (4aS,6R)-4a-hydroxy-L-erythro-5,6,7,8-tetrahydrobiopterin = (6R)-L-erythro-6,7-dihydrobiopterin + H2O. This is Putative pterin-4-alpha-carbinolamine dehydratase from Legionella pneumophila (strain Lens).